Reading from the N-terminus, the 72-residue chain is Caerin-regulated peptide (72 aa).

Positions 1-22 (MAFLKKSLLLVLFLGLVSLSIC) are cleaved as a signal peptide. A propeptide spanning residues 23-43 (DEEKRENEDEEEQEDDEQSEE) is cleaved from the precursor. Residues 24-46 (EEKRENEDEEEQEDDEQSEEKRG) are disordered. Residues 30–41 (EDEEEQEDDEQS) are compositionally biased toward acidic residues.

In terms of tissue distribution, expressed by the skin glands.

The protein resides in the secreted. Its function is as follows. Has antibacterial activity against Gram-positive bacterium M.luteus NCT C2665 and against Gram-negative bacterium E.coli K12D31. The sequence is that of Caerin-regulated peptide from Agalychnis callidryas (Red-eyed tree frog).